The chain runs to 589 residues: Netrin-G2 (589 aa).

Positions 1 to 17 (MLRLLALFLHCLPLVSG) are cleaved as a signal peptide. 3 disulfide bridges follow: Cys-22–Cys-39, Cys-61–Cys-81, and Cys-69–Cys-77. The Laminin N-terminal domain occupies 35–286 (EFYACQPKVM…AISNIEVIGR (252 aa)). The segment at 69-88 (CSHENPYLCSNECDASNPDL) is NGL discriminant loop I. N-linked (GlcNAc...) asparagine glycosylation is found at Asn-122 and Asn-128. A disulfide bond links Cys-171 and Cys-195. Residues 201 to 203 (RWA) are NGL discriminant loop II. An NGL discriminant loop III region spans residues 264–267 (TYVQ). Cystine bridges form between Cys-287–Cys-296, Cys-289–Cys-305, Cys-307–Cys-316, Cys-319–Cys-344, Cys-413–Cys-422, Cys-415–Cys-433, Cys-436–Cys-445, Cys-448–Cys-466, Cys-469–Cys-481, Cys-471–Cys-487, Cys-489–Cys-498, Cys-501–Cys-511, Cys-516–Cys-529, Cys-523–Cys-535, and Cys-537–Cys-546. 3 Laminin EGF-like domains span residues 287-346 (CKCN…ACAA), 413-468 (CECY…VCIE), and 469-513 (CNCN…GCYP). Asn-310 carries N-linked (GlcNAc...) asparagine glycosylation. Asn-455 carries an N-linked (GlcNAc...) asparagine glycan. N-linked (GlcNAc...) asparagine glycosylation is present at Asn-482. A lipid anchor (GPI-anchor amidated glycine) is attached at Gly-566. A propeptide spans 567-589 (IVPRPDTLLGCLLLLGLAARLAC) (removed in mature form).

As to quaternary structure, interacts with LRRC4. Post-translationally, N-glycosylated. Expression is restricted primarily to neurons of the CNS, particularly in the cerebral cortex, habenular nucleus and superior colliculus. Low levels in lung, kidney, heart and spleen.

It is found in the cell membrane. Involved in controlling patterning and neuronal circuit formation at the laminar, cellular, subcellular and synaptic levels. Promotes neurite outgrowth of both axons and dendrites. The chain is Netrin-G2 (Ntng2) from Mus musculus (Mouse).